A 201-amino-acid polypeptide reads, in one-letter code: Increased recombination centers protein 21 (201 aa).

A Cytochrome b5 heme-binding domain is found at 122-200; sequence PLRINRKIVK…LQVCFIGVVC (79 aa). Positions 158 and 182 each coordinate heme.

This sequence belongs to the cytochrome b5 family.

In terms of biological role, involved in resistance to carboplatin and cisplatin. Is probably involved in a pathway contributing to genomic integrity. This chain is Increased recombination centers protein 21 (IRC21), found in Saccharomyces cerevisiae (strain ATCC 204508 / S288c) (Baker's yeast).